Consider the following 365-residue polypeptide: DNA repair protein rhp51 (365 aa).

The segment at 1–25 is disordered; that stretch reads MADTEVEMQVSAADTNNNENGQAQS. Residues 12 to 25 are compositionally biased toward polar residues; it reads AADTNNNENGQAQS. 149-156 contributes to the ATP binding site; the sequence is GEFRTGKS.

This sequence belongs to the RecA family. RAD51 subfamily. In terms of assembly, interacts with rad22, rad54, rdh54, rhp54, rti1, swi2 and swi5. Forms homooiligomers.

The protein resides in the nucleus. In terms of biological role, required both for recombination and for the repair of DNA damage caused by X-rays. Binds to single and double-stranded DNA, in the presence of magnesium, and exhibits DNA-dependent ATPase activity. Promotes DNA strand annealing and strand exchange via DNA recombinase activity and forms helical nucleoprotein filaments. This chain is DNA repair protein rhp51 (rhp51), found in Schizosaccharomyces pombe (strain 972 / ATCC 24843) (Fission yeast).